The sequence spans 507 residues: 3-oxosteroid 1-dehydrogenase (507 aa).

9–38 (DLLVVGSGGGALTGAYTAAAQGLTTIVLEK) contacts FAD. The disordered stretch occupies residues 299 to 385 (GLVVDSPGSV…LPRPDYRPER (87 aa)).

Belongs to the FAD-dependent oxidoreductase 2 family. 3-oxosteroid dehydrogenase subfamily. It depends on FAD as a cofactor.

Its subcellular location is the cell membrane. The enzyme catalyses a 3-oxosteroid + A = a 3-oxo-Delta(1)-steroid + AH2. It functions in the pathway lipid metabolism; steroid degradation. In terms of biological role, catalyzes the elimination of the C-1 and C-2 hydrogen atoms of the A-ring from the polycyclic ring structure of 3-ketosteroids. The sequence is that of 3-oxosteroid 1-dehydrogenase from Rhodococcus opacus (Nocardia opaca).